The primary structure comprises 611 residues: Chaperone protein DnaK (611 aa).

Threonine 173 is subject to Phosphothreonine; by autocatalysis. The span at 577 to 592 (QAAAGQAEGAQGAQDA) shows a compositional bias: low complexity. A disordered region spans residues 577–611 (QAAAGQAEGAQGAQDAGTKKDNVVDAEFEEVKEDK). Acidic residues predominate over residues 600-611 (VDAEFEEVKEDK).

It belongs to the heat shock protein 70 family.

Its function is as follows. Acts as a chaperone. In Bacillus cereus (strain G9842), this protein is Chaperone protein DnaK.